The chain runs to 177 residues: ATP synthase subunit delta (177 aa).

This sequence belongs to the ATPase delta chain family. F-type ATPases have 2 components, F(1) - the catalytic core - and F(0) - the membrane proton channel. F(1) has five subunits: alpha(3), beta(3), gamma(1), delta(1), epsilon(1). F(0) has three main subunits: a(1), b(2) and c(10-14). The alpha and beta chains form an alternating ring which encloses part of the gamma chain. F(1) is attached to F(0) by a central stalk formed by the gamma and epsilon chains, while a peripheral stalk is formed by the delta and b chains.

The protein resides in the cell inner membrane. Functionally, f(1)F(0) ATP synthase produces ATP from ADP in the presence of a proton or sodium gradient. F-type ATPases consist of two structural domains, F(1) containing the extramembraneous catalytic core and F(0) containing the membrane proton channel, linked together by a central stalk and a peripheral stalk. During catalysis, ATP synthesis in the catalytic domain of F(1) is coupled via a rotary mechanism of the central stalk subunits to proton translocation. Its function is as follows. This protein is part of the stalk that links CF(0) to CF(1). It either transmits conformational changes from CF(0) to CF(1) or is implicated in proton conduction. This is ATP synthase subunit delta from Shewanella pealeana (strain ATCC 700345 / ANG-SQ1).